The sequence spans 575 residues: DNA polymerase lambda (575 aa).

The region spanning 36-132 (EAEEWLSSLR…RLVDVAGFSI (97 aa)) is the BRCT domain. Residues 160–205 (ALLQTALPPPPSPTRPVSPPQKTKEAPNTQAQPISDDEASDGEETQ) are disordered. The segment covering 166 to 178 (LPPPPSPTRPVSP) has biased composition (pro residues). A compositionally biased stretch (acidic residues) spans 194–203 (SDDEASDGEE). Residues 265–279 (KAYSVQGDKWRALGY) are DNA-binding. The active-site Schiff-base intermediate with DNA is Lys312. The interval 345 to 348 (GTKT) is DNA-binding. Residues Arg386, 417–420 (SYRR), and 426–429 (GDVD) contribute to the dCTP site. Positions 420–429 (RGKATCGDVD) are involved in primer binding. Asp427, Asp429, and Asp490 together coordinate Mn(2+). Residues 466–505 (ENGQQQKYLGVCRLPGPGWRHRRLDIIVVPYSEFACALLY) form a DNA-binding region. Asn513 serves as a coordination point for dCTP.

It belongs to the DNA polymerase type-X family. Interacts with PCNA. Interacts with PAXX; promoting POLL recruitment to double-strand breaks (DSBs) and stimulation of the end-filling activity of POLL. Interacts with XRCC4; promoting POLL recruitment to double-strand breaks (DSBs) and stimulation of the end-filling activity of POLL. Interacts with NHEJ1/XLF; promoting POLL recruitment to double-strand breaks (DSBs) and stimulation of the end-filling activity of POLL. Mn(2+) is required as a cofactor.

It is found in the nucleus. It catalyses the reaction DNA(n) + a 2'-deoxyribonucleoside 5'-triphosphate = DNA(n+1) + diphosphate. Functionally, DNA polymerase that functions in several pathways of DNA repair. Involved in base excision repair (BER) responsible for repair of lesions that give rise to abasic (AP) sites in DNA. Also contributes to DNA double-strand break repair by non-homologous end joining and homologous recombination. Has both template-dependent and template-independent (terminal transferase) DNA polymerase activities. Also has a 5'-deoxyribose-5-phosphate lyase (dRP lyase) activity. This is DNA polymerase lambda from Macaca fascicularis (Crab-eating macaque).